The chain runs to 296 residues: 4-hydroxybenzoate octaprenyltransferase (296 aa).

8 helical membrane passes run 28 to 48, 51 to 71, 102 to 122, 143 to 163, 174 to 194, 212 to 232, 233 to 253, and 274 to 294; these read IGTL…SDGI, LAVL…GCVI, LLLT…LNHL, FFPI…PMAF, AWIL…VYAM, FGRY…LLMA, VLGA…IVLL, and FLAN…HTFF.

Belongs to the UbiA prenyltransferase family. It depends on Mg(2+) as a cofactor.

Its subcellular location is the cell inner membrane. The catalysed reaction is all-trans-octaprenyl diphosphate + 4-hydroxybenzoate = 4-hydroxy-3-(all-trans-octaprenyl)benzoate + diphosphate. It functions in the pathway cofactor biosynthesis; ubiquinone biosynthesis. Its function is as follows. Catalyzes the prenylation of para-hydroxybenzoate (PHB) with an all-trans polyprenyl group. Mediates the second step in the final reaction sequence of ubiquinone-8 (UQ-8) biosynthesis, which is the condensation of the polyisoprenoid side chain with PHB, generating the first membrane-bound Q intermediate 3-octaprenyl-4-hydroxybenzoate. In Neisseria gonorrhoeae (strain NCCP11945), this protein is 4-hydroxybenzoate octaprenyltransferase.